The chain runs to 144 residues: Large ribosomal subunit protein uL15 (144 aa).

The interval 1 to 59 (MRLNTISPAEGSKPTGKRSGRGIGSGLGKTGGVGHKGQKSRSGGRVKPGFEGGQMPIQR) is disordered. Residues 21–35 (RGIGSGLGKTGGVGH) are compositionally biased toward gly residues.

Belongs to the universal ribosomal protein uL15 family. In terms of assembly, part of the 50S ribosomal subunit.

Functionally, binds to the 23S rRNA. This is Large ribosomal subunit protein uL15 from Alteromonas mediterranea (strain DSM 17117 / CIP 110805 / LMG 28347 / Deep ecotype).